A 405-amino-acid chain; its full sequence is Splicing factor 45 (405 aa).

At Ser-2 the chain carries N-acetylserine. Phosphoserine is present on Ser-2. A Glycyl lysine isopeptide (Lys-Gly) (interchain with G-Cter in SUMO2) cross-link involves residue Lys-15. N6-acetyllysine is present on Lys-21. Residues Lys-24 and Lys-33 each participate in a glycyl lysine isopeptide (Lys-Gly) (interchain with G-Cter in SUMO2) cross-link. Residue Lys-41 is modified to N6-acetyllysine; alternate. Lys-41 is covalently cross-linked (Glycyl lysine isopeptide (Lys-Gly) (interchain with G-Cter in SUMO2); alternate). Positions 57 to 68 (LKRGGSSDDRQI) are enriched in basic and acidic residues. Disordered regions lie at residues 57-88 (LKRG…SGFS) and 114-233 (RQRE…FLAN). A Glycyl lysine isopeptide (Lys-Gly) (interchain with G-Cter in SUMO2) cross-link involves residue Lys-58. A Phosphothreonine modification is found at Thr-71. Residues 114 to 153 (RQREERQRQRELERQKEIEEREKRRKDRHEASGFSRRPDP) are compositionally biased toward basic and acidic residues. Phosphoserine is present on residues Ser-155 and Ser-169. Positions 182–200 (VEKDKELPRDFPYEEDSRP) are enriched in basic and acidic residues. Ser-222 is modified (phosphoserine). A G-patch domain is found at 235–283 (GGTVAHKIMQKYGFREGQGLGKHEQGLSTALSVEKTSKRGGKIIVGDAT). Thr-237 is subject to Phosphothreonine. A Glycyl lysine isopeptide (Lys-Gly) (interchain with G-Cter in SUMO2) cross-link involves residue Lys-256. Ser-266 carries the phosphoserine modification. Lys-276 participates in a covalent cross-link: Glycyl lysine isopeptide (Lys-Gly) (interchain with G-Cter in SUMO2). 2 positions are modified to phosphoserine: Ser-295 and Ser-297. The region spanning 310-389 (VVLLRNMVGA…YFGGRVVKAC (80 aa)) is the RRM domain.

In terms of assembly, binds SXL. Associates with the spliceosome. Interacts with SF3B1, SF1 and U2AF2.

It is found in the nucleus. Functionally, splice factor that binds to the single-stranded 3'AG at the exon/intron border and promotes its utilization in the second catalytic step. Involved in the regulation of alternative splicing and the utilization of cryptic splice sites. The protein is Splicing factor 45 (Rbm17) of Mus musculus (Mouse).